A 201-amino-acid polypeptide reads, in one-letter code: Recombination protein RecR (201 aa).

The C4-type zinc-finger motif lies at 59-74 (CEICGNMDTENICCIC). Positions 82–177 (SVIAVVETVA…KISRLASGIP (96 aa)) constitute a Toprim domain.

It belongs to the RecR family.

In terms of biological role, may play a role in DNA repair. It seems to be involved in an RecBC-independent recombinational process of DNA repair. It may act with RecF and RecO. The protein is Recombination protein RecR of Rickettsia felis (strain ATCC VR-1525 / URRWXCal2) (Rickettsia azadi).